Here is a 630-residue protein sequence, read N- to C-terminus: Mesothelin (630 aa).

The N-terminal stretch at 1–36 (MALPTARPLLGSCGTPALGSLLFLLFSLGWVQPSRT) is a signal peptide. N-linked (GlcNAc...) asparagine glycosylation occurs at Asn57. Ser200 is modified (phosphoserine; by FAM20C). The interval 262–286 (SIPQGIVAAWRQRSSRDPSWRQPER) is required for megakaryocyte-potentiating factor activity. Cys302 and Cys326 are oxidised to a cystine. N-linked (GlcNAc...) asparagine glycosylation is found at Asn388, Asn496, and Asn523. The GPI-anchor amidated serine moiety is linked to residue Ser606. Positions 607-630 (GTPCLLGPGPVLTVLALLLASTLA) are cleaved as a propeptide — removed in mature form.

Belongs to the mesothelin family. As to quaternary structure, interacts with MUC16. In terms of processing, both MPF and the cleaved form of mesothelin are N-glycosylated. Post-translationally, proteolytically cleaved by a furin-like convertase to generate megakaryocyte-potentiating factor (MPF), and the cleaved form of mesothelin. In terms of tissue distribution, expressed in lung. Expressed at low levels in heart, placenta and kidney. Expressed in mesothelial cells. Highly expressed in mesotheliomas, ovarian cancers, and some squamous cell carcinomas (at protein level).

Its subcellular location is the cell membrane. The protein localises to the golgi apparatus. It is found in the secreted. Functionally, membrane-anchored forms may play a role in cellular adhesion. Its function is as follows. Megakaryocyte-potentiating factor (MPF) potentiates megakaryocyte colony formation in vitro. The sequence is that of Mesothelin (MSLN) from Homo sapiens (Human).